Consider the following 831-residue polypeptide: Leucine--tRNA ligase (831 aa).

Positions 36 to 46 (PYPSGKLHIGH) match the 'HIGH' region motif. Residues 607-611 (KMSKS) carry the 'KMSKS' region motif. ATP is bound at residue K610.

This sequence belongs to the class-I aminoacyl-tRNA synthetase family.

Its subcellular location is the cytoplasm. The enzyme catalyses tRNA(Leu) + L-leucine + ATP = L-leucyl-tRNA(Leu) + AMP + diphosphate. The sequence is that of Leucine--tRNA ligase from Neorickettsia sennetsu (strain ATCC VR-367 / Miyayama) (Ehrlichia sennetsu).